Consider the following 259-residue polypeptide: Binding partner of ACD11 1 (259 aa).

In terms of domain architecture, RRM spans 6–77 (RSVKVGNLSS…QSVIIELAPN (72 aa)). The disordered stretch occupies residues 219 to 259 (GEVGQKTKEKVEAEQPSQPAQSQQQLPEGYSPIHSSEYSKN). Positions 232–243 (EQPSQPAQSQQQ) are enriched in low complexity.

Interacts with ACD11, PR1F2 and PR1F3.

It localises to the cytoplasm. Its subcellular location is the membrane. This chain is Binding partner of ACD11 1 (BPA1), found in Arabidopsis thaliana (Mouse-ear cress).